Consider the following 588-residue polypeptide: DELLA protein GAI (588 aa).

Positions 1–15 are enriched in basic and acidic residues; that stretch reads MKRDRDRDREREKRA. Positions 1-38 are disordered; it reads MKRDRDRDREREKRAFSNGAVSSGKSKIWEEDEEEKPD. A DELLA motif motif is present at residues 42–46; the sequence is DELLA. The interval 152–177 is disordered; sequence GAVFNSDSNKRHRSTTSSFSTTSSSM. Residues 166-177 are compositionally biased toward low complexity; sequence TTSSFSTTSSSM. The 385-residue stretch at 190-574 folds into the GRAS domain; that stretch reads VDSQETGVRL…RPLIATSAWK (385 aa). The interval 197–251 is leucine repeat I (LRI); sequence VRLVHTLMACAEAVQQENLTLADQLVRHIGILAVSQSGAMRKVATYFAEALARRI. A VHIID region spans residues 269–334; that stretch reads QMHFYETCPY…GGPPAFRLTG (66 aa). The short motif at 300–304 is the VHIID element; sequence VHVID. The segment at 348-380 is leucine repeat II (LRII); the sequence is QVGWKLAQLAETIGVEFEFRGFVANSLADLDAT. The PFYRE stretch occupies residues 392 to 495; sequence VAINSVFELH…EVYLGRQICN (104 aa). The LXXLL motif signature appears at 400–404; that stretch reads LHRLL. Positions 498 to 574 are SAW; it reads ACEGSDRVER…RPLIATSAWK (77 aa).

The protein belongs to the GRAS family. DELLA subfamily. Post-translationally, phosphorylated. Ubiquitinated. Upon GA application it is ubiquitinated, leading to its subsequent degradation. As to expression, expressed in both vegetative and reproductive tissues.

The protein resides in the nucleus. Its function is as follows. Probable transcriptional regulator that acts as a repressor of the gibberellin (GA) signaling pathway. Probably acts by participating in large multiprotein complexes that repress transcription of GA-inducible genes. Upon GA application, it is degraded by the proteasome, allowing the GA signaling pathway. Its degradation is not essential for germination. This is DELLA protein GAI (GAI) from Solanum lycopersicum (Tomato).